The following is a 204-amino-acid chain: uncharacterized protein (204 aa).

The segment at 47-108 is disordered; sequence TDSSDDEGGA…EDSDEEGEGG (62 aa). A compositionally biased stretch (acidic residues) spans 49 to 106; that stretch reads SSDDEGGASSGDEGEASSDDEGDASSDDEEEASSDGEGVVEDEETLDAEGEDSDEEGE.

The protein localises to the mitochondrion. This is an uncharacterized protein from Paramecium tetraurelia.